The chain runs to 235 residues: MEEGDFFNCCFSEISSGMTMNKKKMKKSNNQKRFSEEQIKSLELIFESETRLEPRKKVQVARELGLQPRQVAIWFQNKRARWKTKQLEKEYNTLRANYNNLASQFEIMKKEKQSLVSELQRLNEEMQRPKEEKHHECCGDQGLALSSSTESHNGKSEPEGRLDQGSVLCNDGDYNNNIKTEYFGFEEETDHELMNIVEKADDSCLTSSENWGGFNSDSLLDQSSSNYPNWWEFWS.

The segment at residues K27 to Q86 is a DNA-binding region (homeobox). The interval L87–L122 is leucine-zipper. Basic and acidic residues-rich tracts occupy residues R128 to C138 and H152 to L162. The tract at residues R128–V167 is disordered.

The protein belongs to the HD-ZIP homeobox family. Class I subfamily. In terms of assembly, interacts with TFIIB1. In terms of tissue distribution, widely expressed.

Its subcellular location is the nucleus. In terms of biological role, probable transcription activator that may act as growth regulators in response to water deficit. The protein is Homeobox-leucine zipper protein ATHB-12 (ATHB-12) of Arabidopsis thaliana (Mouse-ear cress).